The primary structure comprises 159 residues: Olfactory receptor-like protein COR8 (159 aa).

Topologically, residues 1-16 (VAICNPLLYTISMPKS) are cytoplasmic. A helical membrane pass occupies residues 17 to 41 (LCMKLVAGSYLGGVLNSLTQTCCLL). The Extracellular portion of the chain corresponds to 42 to 82 (PLPFCGPNVINHYFCDTNPLLKLTCSDGRLNELLLVTFNGT). Asn-80 carries N-linked (GlcNAc...) asparagine glycosylation. A helical transmembrane segment spans residues 83–103 (ISMTVLLIIVISYVYILVSIL). The Cytoplasmic segment spans residues 104–116 (SIRSARGRHKAFS). A helical transmembrane segment spans residues 117 to 137 (TCASHLLTVTLFYVPAGLSHM). The Extracellular segment spans residues 138–148 (QPGSKYSLDME). Residues 149-159 (KVTAVFYTLLV) traverse the membrane as a helical segment.

This sequence belongs to the G-protein coupled receptor 1 family.

It is found in the cell membrane. Odorant receptor. In Gallus gallus (Chicken), this protein is Olfactory receptor-like protein COR8 (COR8).